A 326-amino-acid polypeptide reads, in one-letter code: N-acetyl-gamma-glutamyl-phosphate reductase (326 aa).

Cysteine 155 is a catalytic residue.

It belongs to the NAGSA dehydrogenase family. Type 1 subfamily.

The protein localises to the cytoplasm. It catalyses the reaction N-acetyl-L-glutamate 5-semialdehyde + phosphate + NADP(+) = N-acetyl-L-glutamyl 5-phosphate + NADPH + H(+). It functions in the pathway amino-acid biosynthesis; L-arginine biosynthesis; N(2)-acetyl-L-ornithine from L-glutamate: step 3/4. In terms of biological role, catalyzes the NADPH-dependent reduction of N-acetyl-5-glutamyl phosphate to yield N-acetyl-L-glutamate 5-semialdehyde. In Shewanella oneidensis (strain ATCC 700550 / JCM 31522 / CIP 106686 / LMG 19005 / NCIMB 14063 / MR-1), this protein is N-acetyl-gamma-glutamyl-phosphate reductase.